Consider the following 787-residue polypeptide: Dolichyl-diphosphooligosaccharide--protein glycosyltransferase subunit STT3A (787 aa).

At 1 to 18 (MAEPESSTAAAGGSRLRN) the chain is on the cytoplasmic side. A helical membrane pass occupies residues 19 to 39 (ACGGVLCAFTLLLIGVLAFSI). Residues 40-125 (RLFSVIKYES…LSVETVCVFT (86 aa)) are Lumenal-facing. Residues 53–55 (EFD) carry the DXD motif 1 motif. Aspartate 55 is a binding site for Mn(2+). Residues 126–144 (APIFSANASWATYLLTKEA) form a helical membrane-spanning segment. Residues 145–146 (KG) are Cytoplasmic-facing. Residues 147 to 164 (TGAGLMAAAILAMVPSYI) traverse the membrane as a helical segment. Residues 165 to 175 (SRSVAGSYDNE) are Lumenal-facing. Mn(2+)-binding residues include aspartate 173 and glutamate 175. A DXD motif 2 motif is present at residues 173-175 (DNE). The helical transmembrane segment at 176 to 195 (AVAIFALIFTFYLYVKTLNT) threads the bilayer. Residues 196–197 (GS) are Cytoplasmic-facing. The chain crosses the membrane as a helical span at residues 198 to 212 (LFYATLNALSYFYMV). The Lumenal segment spans residues 213-217 (CSWGG). Residues 218–234 (YTFIINLIPIHVLLCIV) traverse the membrane as a helical segment. Residues 235 to 239 (TGRYS) are Cytoplasmic-facing. Residues 240–265 (SRLYIAYAPLVILGTLLAALVPVVGF) form a helical membrane-spanning segment. Over 266–273 (NAVMTSEH) the chain is Lumenal. A helical membrane pass occupies residues 274 to 293 (FASFLVFIILHVVALVYYIK). At 294-306 (GLLTPRLFKVAMT) the chain is on the cytoplasmic side. The helical transmembrane segment at 307–327 (LVITVGLAVCFAVIAILIALV) threads the bilayer. At 328 to 365 (ASSPTKGWSGRSLSLLDPTYASKYIPIIASVSEHQPPT) the chain is on the lumenal side. The short motif at 357-360 (SVSE) is the SVSE motif element. Residues 366–388 (WPSYFMDINVLAFLIPAGIISCF) form a helical membrane-spanning segment. Residues 389–394 (LPLSDA) lie on the Cytoplasmic side of the membrane. The helical transmembrane segment at 395–411 (SSFVVLYLVTAVYFSGV) threads the bilayer. Residues 412–415 (MVRL) are Lumenal-facing. Dolichyl diphosphooligosaccharide is bound at residue arginine 414. A helical membrane pass occupies residues 416-437 (MLVLAPAACILSGIALSEAFDV). At 438–525 (LTRSVKYQLS…KLLVLPMEAS (88 aa)) the chain is on the cytoplasmic side. Residues 453–475 (SPAASGDSSAESSSASTVSTNSA) show a composition bias toward low complexity. Positions 453-507 (SPAASGDSSAESSSASTVSTNSAKNETRPEKTETAPKEKPSKKNRKKEKEVAESV) are disordered. The span at 477-504 (NETRPEKTETAPKEKPSKKNRKKEKEVA) shows a compositional bias: basic and acidic residues. Residues 526 to 546 (VLGILLLIVLGGFYVVHCVWA) traverse the membrane as a helical segment. Topologically, residues 547–787 (AAEAYSAPSI…AAGRKKNPWQ (241 aa)) are lumenal. Residues 592 to 594 (WWD) are interacts with target acceptor peptide in protein substrate. The short motif at 592-596 (WWDYG) is the WWDYG motif element. Dolichyl diphosphooligosaccharide is bound at residue tyrosine 597. Asparagine 604 and asparagine 611 each carry an N-linked (GlcNAc...) asparagine glycan. Asparagine 615 is a glycosylation site (N-linked (GlcNAc...) (high mannose) asparagine). The short motif at 659 to 666 (DINKFLWM) is the DK motif element. A compositionally biased stretch (basic residues) spans 759-769 (RVRGKLKKLKS). The tract at residues 759-787 (RVRGKLKKLKSGSKASSTNAAGRKKNPWQ) is disordered.

It belongs to the STT3 family. As to quaternary structure, component of the oligosaccharyltransferase (OST) complex. It depends on Mg(2+) as a cofactor. The cofactor is Mn(2+).

It is found in the endoplasmic reticulum membrane. The enzyme catalyses a di-trans,poly-cis-dolichyl diphosphooligosaccharide + L-asparaginyl-[protein] = N(4)-(oligosaccharide-(1-&gt;4)-N-acetyl-beta-D-glucosaminyl-(1-&gt;4)-N-acetyl-beta-D-glucosaminyl)-L-asparaginyl-[protein] + a di-trans,poly-cis-dolichyl diphosphate + H(+). Its pathway is protein modification; protein glycosylation. In terms of biological role, catalytic subunit of the oligosaccharyl transferase (OST) complex that catalyzes the initial transfer of a defined glycan (Glc(3)Man(9)GlcNAc(2) in eukaryotes) from the lipid carrier dolichol-pyrophosphate to an asparagine residue within an Asn-X-Ser/Thr consensus motif in nascent polypeptide chains, the first step in protein N-glycosylation. N-glycosylation occurs cotranslationally and the complex associates with the Sec61 complex at the channel-forming translocon complex that mediates protein translocation across the endoplasmic reticulum (ER). All subunits are required for a maximal enzyme activity. This subunit contains the active site and the acceptor peptide and donor lipid-linked oligosaccharide (LLO) binding pockets. The protein is Dolichyl-diphosphooligosaccharide--protein glycosyltransferase subunit STT3A (STT3A) of Oryza sativa subsp. japonica (Rice).